An 858-amino-acid polypeptide reads, in one-letter code: Protein translocase subunit SecA (858 aa).

Residues glutamine 85, 103-107 (GEGKT), and aspartate 511 each bind ATP. Zn(2+) is bound by residues cysteine 840, cysteine 842, cysteine 851, and cysteine 852.

The protein belongs to the SecA family. As to quaternary structure, monomer and homodimer. Part of the essential Sec protein translocation apparatus which comprises SecA, SecYEG and auxiliary proteins SecDF. Other proteins may also be involved. Zn(2+) is required as a cofactor.

The protein localises to the cell membrane. The protein resides in the cytoplasm. The enzyme catalyses ATP + H2O + cellular proteinSide 1 = ADP + phosphate + cellular proteinSide 2.. In terms of biological role, part of the Sec protein translocase complex. Interacts with the SecYEG preprotein conducting channel. Has a central role in coupling the hydrolysis of ATP to the transfer of proteins into and across the cell membrane, serving as an ATP-driven molecular motor driving the stepwise translocation of polypeptide chains across the membrane. The protein is Protein translocase subunit SecA of Lachnoclostridium phytofermentans (strain ATCC 700394 / DSM 18823 / ISDg) (Clostridium phytofermentans).